A 419-amino-acid polypeptide reads, in one-letter code: Tubby-like protein 4 (419 aa).

Residues 1-96 are disordered; that stretch reads MAATKREPLR…EREEEEEGSS (96 aa). The span at 33–57 shows a compositional bias: basic and acidic residues; it reads AKEKEKENEVPTEIGRGKDGGEKKP.

Belongs to the TUB family.

This Oryza sativa subsp. japonica (Rice) protein is Tubby-like protein 4 (TULP4).